Consider the following 1940-residue polypeptide: Rho GTPase-activating protein 32 (1940 aa).

The PX; atypical domain maps to 154-248 (SKELVFLVQI…LTWMEIDNKG (95 aa)). The SH3 domain maps to 262–324 (PAIAAAHVIK…PSECVELIND (63 aa)). The Rho-GAP domain occupies 375–570 (CDLGEHLLNS…FILNHVEVLF (196 aa)). 5 disordered regions span residues 646 to 746 (FPSE…LSAS), 1035 to 1163 (RANQ…FSVT), 1219 to 1264 (FTTG…PPVR), 1430 to 1454 (KHPRSRNKPDYMPSMSPGVRSYTED), and 1675 to 1786 (RSRS…HSSA). Residues 1047–1061 (PQGASASESPQELSH) are compositionally biased toward polar residues. 2 stretches are compositionally biased toward low complexity: residues 1081–1094 (LALALAESAQQASA) and 1145–1163 (SRKTSPATPPSTTSSFSVT). Residues 1691–1707 (ETKDVRYPGRTEGDERT) show a composition bias toward basic and acidic residues. Residues 1725-1734 (PQKQSGSSRS) show a composition bias toward polar residues. Positions 1736-1755 (MQHDISTEQHSQDTLHRQPS) are enriched in basic and acidic residues.

The protein belongs to the PX domain-containing GAP family.

It localises to the cytoplasm. The protein resides in the membrane. Its subcellular location is the cell membrane. Its function is as follows. GTPase-activating protein (GAP) promoting GTP hydrolysis on RHOA, CDC42 and RAC1 small GTPases. This chain is Rho GTPase-activating protein 32 (arhgap32), found in Xenopus laevis (African clawed frog).